Here is a 459-residue protein sequence, read N- to C-terminus: U-box domain-containing protein 75 (459 aa).

Residues 64 to 138 (AVPAVFICPI…AAWFSRRYTR (75 aa)) enclose the U-box domain. 2 ARM repeats span residues 188-229 (QSVT…GVPL) and 231-270 (ADAK…ILME).

In terms of assembly, interacts with GPA1. In terms of tissue distribution, expressed highly in panicles at flowering time, at moderate levels in vegetative shoot apices, leaf sheaths, leaf blades, and elongating internodes, and at low levels in roots.

It localises to the cell membrane. The enzyme catalyses S-ubiquitinyl-[E2 ubiquitin-conjugating enzyme]-L-cysteine + [acceptor protein]-L-lysine = [E2 ubiquitin-conjugating enzyme]-L-cysteine + N(6)-ubiquitinyl-[acceptor protein]-L-lysine.. It participates in protein modification; protein ubiquitination. Its function is as follows. E3 ubiquitin ligase that may function as positive regulator of brassinosteroid (BR) signaling. Possesses E3 ubiquitin ligase in vitro. Acts together with the heterotrimeric G alpha subunit GPA1 at the plasma membrane to mediate a BR signaling pathway that affects plant growth and development. Does not seem to be involved in gibberellin or cytokinin responses. The chain is U-box domain-containing protein 75 from Oryza sativa subsp. japonica (Rice).